Consider the following 126-residue polypeptide: Small ribosomal subunit protein uS13 (126 aa).

The tract at residues 99 to 126 (LRGQSTKNNARTRKGKKKTVANKKKATK) is disordered. A compositionally biased stretch (basic residues) spans 108–126 (ARTRKGKKKTVANKKKATK).

Belongs to the universal ribosomal protein uS13 family. In terms of assembly, part of the 30S ribosomal subunit. Forms a loose heterodimer with protein S19. Forms two bridges to the 50S subunit in the 70S ribosome.

Located at the top of the head of the 30S subunit, it contacts several helices of the 16S rRNA. In the 70S ribosome it contacts the 23S rRNA (bridge B1a) and protein L5 of the 50S subunit (bridge B1b), connecting the 2 subunits; these bridges are implicated in subunit movement. Contacts the tRNAs in the A and P-sites. The polypeptide is Small ribosomal subunit protein uS13 (Porphyromonas gingivalis (strain ATCC 33277 / DSM 20709 / CIP 103683 / JCM 12257 / NCTC 11834 / 2561)).